A 37-amino-acid chain; its full sequence is Large ribosomal subunit protein bL36c (37 aa).

It belongs to the bacterial ribosomal protein bL36 family.

The protein localises to the plastid. Its subcellular location is the chloroplast. In Huperzia lucidula (Shining clubmoss), this protein is Large ribosomal subunit protein bL36c.